Reading from the N-terminus, the 319-residue chain is 7,8-didemethyl-8-hydroxy-5-deazariboflavin synthase (319 aa).

In terms of domain architecture, Radical SAM core spans 6–236; sequence VTYSPAFTLV…AEITIQIPPN (231 aa). Cysteine 20, cysteine 24, and cysteine 27 together coordinate [4Fe-4S] cluster.

The protein belongs to the radical SAM superfamily. CofG family. Consists of two subunits, CofG and CofH. [4Fe-4S] cluster serves as cofactor.

It catalyses the reaction 5-amino-5-(4-hydroxybenzyl)-6-(D-ribitylimino)-5,6-dihydrouracil + S-adenosyl-L-methionine = 7,8-didemethyl-8-hydroxy-5-deazariboflavin + 5'-deoxyadenosine + L-methionine + NH4(+) + H(+). Its pathway is cofactor biosynthesis; coenzyme F0 biosynthesis. Its function is as follows. Catalyzes the radical-mediated synthesis of 7,8-didemethyl-8-hydroxy-5-deazariboflavin from 5-amino-5-(4-hydroxybenzyl)-6-(D-ribitylimino)-5,6-dihydrouracil. The chain is 7,8-didemethyl-8-hydroxy-5-deazariboflavin synthase from Gloeobacter violaceus (strain ATCC 29082 / PCC 7421).